We begin with the raw amino-acid sequence, 434 residues long: Beta-enolase (434 aa).

Alanine 2 bears the N-acetylalanine mark. Position 72 is a phosphothreonine (threonine 72). A phosphoserine mark is found at serine 83 and serine 157. Substrate contacts are provided by histidine 158 and glutamate 167. The residue at position 176 (serine 176) is a Phosphoserine. The residue at position 205 (threonine 205) is a Phosphothreonine. Residue glutamate 210 is the Proton donor of the active site. Threonine 229 is modified (phosphothreonine). The residue at position 236 (tyrosine 236) is a Phosphotyrosine. Aspartate 245 provides a ligand contact to Mg(2+). Serine 263 carries the post-translational modification Phosphoserine. The substrate site is built by glutamate 293 and aspartate 318. Glutamate 293 and aspartate 318 together coordinate Mg(2+). Lysine 343 functions as the Proton acceptor in the catalytic mechanism. Substrate-binding positions include 370–373 (SHRS) and lysine 394.

Belongs to the enolase family. As to quaternary structure, mammalian enolase is composed of 3 isozyme subunits, alpha, beta and gamma, which can form homodimers or heterodimers which are cell-type and development-specific. Interacts with PNKD. Mg(2+) serves as cofactor. In terms of tissue distribution, the alpha/alpha homodimer is expressed in embryo and in most adult tissues. The alpha/beta heterodimer and the beta/beta homodimer are found in striated muscle, and the alpha/gamma heterodimer and the gamma/gamma homodimer in neurons.

It localises to the cytoplasm. It catalyses the reaction (2R)-2-phosphoglycerate = phosphoenolpyruvate + H2O. It functions in the pathway carbohydrate degradation; glycolysis; pyruvate from D-glyceraldehyde 3-phosphate: step 4/5. In terms of biological role, glycolytic enzyme that catalyzes the conversion of 2-phosphoglycerate to phosphoenolpyruvate. Appears to have a function in striated muscle development and regeneration. This Oryctolagus cuniculus (Rabbit) protein is Beta-enolase (ENO3).